We begin with the raw amino-acid sequence, 650 residues long: Chaperone protein DnaK (650 aa).

A Phosphothreonine; by autocatalysis modification is found at threonine 200. The segment at 613–634 is disordered; it reads QAGAAGAAGAAEGAAHAGGAQQ.

It belongs to the heat shock protein 70 family.

In terms of biological role, acts as a chaperone. This is Chaperone protein DnaK from Burkholderia vietnamiensis (strain G4 / LMG 22486) (Burkholderia cepacia (strain R1808)).